A 243-amino-acid chain; its full sequence is MTGIAAASFFSNTCRFGGCGLHFPTLADLIEHIEDNHIDTDPRVLEKQELQQPTYVALSYINRFMTDAARREQESLKKKIQPKLSLTLSSSVSRGNVSTPPRHSSGSLTPPVTPPITPSSSFRSSTPTGSEYDEEEVDYEESDSDESWTTESAISSEAILSSMCMNGGEEKPFACPVPGCKKRYKNVNGIKYHAKNGHRTQIRVRKPFKCRCGKSYKTAQGLRHHTINFHPPVSAEIIRKMQQ.

The segment at 12–37 (NTCRFGGCGLHFPTLADLIEHIEDNH) adopts a C2H2-type 1 zinc-finger fold. The tract at residues 39–79 (DTDPRVLEKQELQQPTYVALSYINRFMTDAARREQESLKKK) is required for interaction with NR2C2. A compositionally biased stretch (polar residues) spans 89-108 (SSSVSRGNVSTPPRHSSGSL). The interval 89–151 (SSSVSRGNVS…SDSDESWTTE (63 aa)) is disordered. Residues Thr109 and Thr113 each carry the phosphothreonine modification. A compositionally biased stretch (low complexity) spans 118 to 130 (PSSSFRSSTPTGS). Residues 131-148 (EYDEEEVDYEESDSDESW) show a composition bias toward acidic residues. The segment at 173 to 198 (FACPVPGCKKRYKNVNGIKYHAKNGH) adopts a C2H2-type 2 zinc-finger fold. The C2H2-type 3; degenerate zinc finger occupies 208-230 (FKCRCGKSYKTAQGLRHHTINFH).

In terms of assembly, interacts with NR2C2 (via ligand-binding region). In terms of tissue distribution, highest expression in testis with moderate levels in colon, placenta, prostate and ovary and low levels in brain, spleen, liver and small intestine.

It localises to the nucleus. Functionally, acts as a transcriptional corepressor of orphan nuclear receptor NR2C2. Inhibits expression of the gluconeogenesis enzyme PCK2 through inhibition of NR2C2 activity. Also involved in transcriptional activation of NAMPT by promoting expression of PPARA and PPARD. Plays a role in lipid metabolism by suppressing lipogenesis, increasing lipolysis and decreasing lipid accumulation in adipose tissue. Plays a role in glucose homeostasis by improving glucose metabolism and insulin sensitivity. This Homo sapiens (Human) protein is Juxtaposed with another zinc finger protein 1.